A 116-amino-acid chain; its full sequence is Ribosome-binding factor A (116 aa).

This sequence belongs to the RbfA family. Monomer. Binds 30S ribosomal subunits, but not 50S ribosomal subunits or 70S ribosomes.

It localises to the cytoplasm. One of several proteins that assist in the late maturation steps of the functional core of the 30S ribosomal subunit. Associates with free 30S ribosomal subunits (but not with 30S subunits that are part of 70S ribosomes or polysomes). Required for efficient processing of 16S rRNA. May interact with the 5'-terminal helix region of 16S rRNA. In Streptococcus pneumoniae (strain ATCC BAA-255 / R6), this protein is Ribosome-binding factor A.